The following is a 242-amino-acid chain: Uridylate kinase (242 aa).

An ATP-binding site is contributed by 12–15 (KLSG). The involved in allosteric activation by GTP stretch occupies residues 20–25 (GQKGYG). Residue Gly54 coordinates UMP. Residues Gly55 and Arg59 each contribute to the ATP site. UMP contacts are provided by residues Asp74 and 135–142 (TGNPYFST). Positions 163, 168, and 171 each coordinate ATP.

This sequence belongs to the UMP kinase family. In terms of assembly, homohexamer.

Its subcellular location is the cytoplasm. It catalyses the reaction UMP + ATP = UDP + ADP. It participates in pyrimidine metabolism; CTP biosynthesis via de novo pathway; UDP from UMP (UMPK route): step 1/1. With respect to regulation, allosterically activated by GTP. Inhibited by UTP. Functionally, catalyzes the reversible phosphorylation of UMP to UDP. This Desulforamulus reducens (strain ATCC BAA-1160 / DSM 100696 / MI-1) (Desulfotomaculum reducens) protein is Uridylate kinase.